The sequence spans 173 residues: C-phycocyanin beta subunit (173 aa).

An N4-methylasparagine modification is found at Asn73. (2R,3E)-phycocyanobilin contacts are provided by Cys83 and Cys154.

It belongs to the phycobiliprotein family. In terms of assembly, heterodimer of an alpha and a beta subunit. Part of 2 PBS rod complexes, the conventional PBS rod and a photosystem I-specific CpcL-PBS rod. Post-translationally, contains two covalently linked bilin chromophores.

Its subcellular location is the cellular thylakoid membrane. Its function is as follows. Light-harvesting photosynthetic bile pigment-protein from the phycobiliprotein complex (phycobilisome, PBS). Phycocyanin is the major phycobiliprotein in the PBS rod. In Nostoc sp. (strain PCC 7120 / SAG 25.82 / UTEX 2576), this protein is C-phycocyanin beta subunit (cpcB).